The following is a 230-amino-acid chain: Large ribosomal subunit protein uL1 (230 aa).

Belongs to the universal ribosomal protein uL1 family. As to quaternary structure, part of the 50S ribosomal subunit.

In terms of biological role, binds directly to 23S rRNA. The L1 stalk is quite mobile in the ribosome, and is involved in E site tRNA release. Protein L1 is also a translational repressor protein, it controls the translation of the L11 operon by binding to its mRNA. The polypeptide is Large ribosomal subunit protein uL1 (Bacillus mycoides (strain KBAB4) (Bacillus weihenstephanensis)).